The primary structure comprises 420 residues: Glutamyl-tRNA reductase (420 aa).

Substrate-binding positions include Thr-49–Arg-52, Ser-109, Glu-114–Gln-116, and Gln-120. Cys-50 (nucleophile) is an active-site residue. Position 189–194 (Gly-189–Ile-194) interacts with NADP(+).

The protein belongs to the glutamyl-tRNA reductase family. As to quaternary structure, homodimer.

The enzyme catalyses (S)-4-amino-5-oxopentanoate + tRNA(Glu) + NADP(+) = L-glutamyl-tRNA(Glu) + NADPH + H(+). Its pathway is porphyrin-containing compound metabolism; protoporphyrin-IX biosynthesis; 5-aminolevulinate from L-glutamyl-tRNA(Glu): step 1/2. Functionally, catalyzes the NADPH-dependent reduction of glutamyl-tRNA(Glu) to glutamate 1-semialdehyde (GSA). This is Glutamyl-tRNA reductase from Serratia proteamaculans (strain 568).